The following is a 301-amino-acid chain: Cilia- and flagella-associated protein 161 (301 aa).

Its subcellular location is the cytoplasm. It localises to the cytoskeleton. It is found in the cilium axoneme. Its function is as follows. Microtubule inner protein (MIP) part of the dynein-decorated doublet microtubules (DMTs) in cilia axoneme, which is required for motile cilia beating. This is Cilia- and flagella-associated protein 161 from Danio rerio (Zebrafish).